A 189-amino-acid polypeptide reads, in one-letter code: Probable nicotinate-nucleotide adenylyltransferase (189 aa).

Belongs to the NadD family.

It carries out the reaction nicotinate beta-D-ribonucleotide + ATP + H(+) = deamido-NAD(+) + diphosphate. It participates in cofactor biosynthesis; NAD(+) biosynthesis; deamido-NAD(+) from nicotinate D-ribonucleotide: step 1/1. Catalyzes the reversible adenylation of nicotinate mononucleotide (NaMN) to nicotinic acid adenine dinucleotide (NaAD). The polypeptide is Probable nicotinate-nucleotide adenylyltransferase (Bacillus cytotoxicus (strain DSM 22905 / CIP 110041 / 391-98 / NVH 391-98)).